Reading from the N-terminus, the 118-residue chain is uncharacterized protein (118 aa).

Residues 25–85 are disordered; that stretch reads AEQPGSGGIA…SSSSTPSRAR (61 aa). Residues 71–83 are compositionally biased toward low complexity; that stretch reads RPSASSSSSTPSR.

This is an uncharacterized protein from Azospirillum brasilense.